The chain runs to 307 residues: Elongation factor Ts (307 aa).

Positions 80 to 83 (TDFV) are involved in Mg(2+) ion dislocation from EF-Tu.

This sequence belongs to the EF-Ts family.

It localises to the cytoplasm. In terms of biological role, associates with the EF-Tu.GDP complex and induces the exchange of GDP to GTP. It remains bound to the aminoacyl-tRNA.EF-Tu.GTP complex up to the GTP hydrolysis stage on the ribosome. This chain is Elongation factor Ts, found in Bradyrhizobium diazoefficiens (strain JCM 10833 / BCRC 13528 / IAM 13628 / NBRC 14792 / USDA 110).